We begin with the raw amino-acid sequence, 186 residues long: Elongation factor P (186 aa).

Belongs to the elongation factor P family.

It is found in the cytoplasm. It functions in the pathway protein biosynthesis; polypeptide chain elongation. In terms of biological role, involved in peptide bond synthesis. Stimulates efficient translation and peptide-bond synthesis on native or reconstituted 70S ribosomes in vitro. Probably functions indirectly by altering the affinity of the ribosome for aminoacyl-tRNA, thus increasing their reactivity as acceptors for peptidyl transferase. The sequence is that of Elongation factor P from Prochlorococcus marinus subsp. pastoris (strain CCMP1986 / NIES-2087 / MED4).